A 192-amino-acid polypeptide reads, in one-letter code: Transmembrane protein 11, mitochondrial (192 aa).

A disordered region spans residues 1–20 (MAAWGRRRLGPGSGGGGARE). Helical transmembrane passes span 84-100 (TTVL…LALP) and 107-124 (ISLP…LYGI).

This sequence belongs to the TMEM11 family. Associates with the mitochondrial contact site and cristae organizing system (MICOS) complex, composed of at least MICOS10/MIC10, CHCHD3/MIC19, CHCHD6/MIC25, APOOL/MIC27, IMMT/MIC60, APOO/MIC23/MIC26 and QIL1/MIC13. This complex was also known under the names MINOS or MitOS complex. The MICOS complex associates with mitochondrial outer membrane proteins SAMM50, MTX1, MTX2 and DNAJC11, mitochondrial inner membrane protein TMEM11 and with HSPA9. Interacts with IMMT/MIC60.

Its subcellular location is the mitochondrion inner membrane. In terms of biological role, plays a role in mitochondrial morphogenesis. The sequence is that of Transmembrane protein 11, mitochondrial (TMEM11) from Bos taurus (Bovine).